A 367-amino-acid chain; its full sequence is Flagellar P-ring protein (367 aa).

The signal sequence occupies residues Met1–Ala21.

The protein belongs to the FlgI family. The basal body constitutes a major portion of the flagellar organelle and consists of four rings (L,P,S, and M) mounted on a central rod.

Its subcellular location is the periplasm. It localises to the bacterial flagellum basal body. Assembles around the rod to form the L-ring and probably protects the motor/basal body from shearing forces during rotation. The protein is Flagellar P-ring protein of Salmonella arizonae (strain ATCC BAA-731 / CDC346-86 / RSK2980).